Consider the following 351-residue polypeptide: Molybdenum import ATP-binding protein ModC (351 aa).

The region spanning 1 to 229 (MLQINVKKQL…PIFAPWKGES (229 aa)) is the ABC transporter domain. Residue 31–38 (GLSGSGKT) participates in ATP binding. In terms of domain architecture, Mop spans 289-351 (QTSIRNILRG…YVQIKAVSVM (63 aa)).

It belongs to the ABC transporter superfamily. Molybdate importer (TC 3.A.1.8) family. As to quaternary structure, the complex is composed of two ATP-binding proteins (ModC), two transmembrane proteins (ModB) and a solute-binding protein (ModA).

It localises to the cell inner membrane. The catalysed reaction is molybdate(out) + ATP + H2O = molybdate(in) + ADP + phosphate + H(+). In terms of biological role, part of the ABC transporter complex ModABC involved in molybdenum import. Responsible for energy coupling to the transport system. The protein is Molybdenum import ATP-binding protein ModC of Haemophilus influenzae (strain ATCC 51907 / DSM 11121 / KW20 / Rd).